Here is a 226-residue protein sequence, read N- to C-terminus: MKITYLTLFPNLMRCYFEDSILKRALEKKLFEIEFIDYRAFSHNKHKKVDRYKIGGGAGMLLEPRPIADALEFIKKKESWVVFTTPVAKRFTQKDAKRLAHKKHIVFVNGRYEGFDERLIEIYADEVFSIGDFILTGGELASLVMSDAIVRNIPGVLGNSASLEEESFEGDLLEAPSFTKPDVFKGKAVIKEFLKGNHSKISALKYQLARLRTKYYRPDKRIEDEK.

Residues G110 and 130–135 (IGDFIL) each bind S-adenosyl-L-methionine.

Belongs to the RNA methyltransferase TrmD family. As to quaternary structure, homodimer.

Its subcellular location is the cytoplasm. It catalyses the reaction guanosine(37) in tRNA + S-adenosyl-L-methionine = N(1)-methylguanosine(37) in tRNA + S-adenosyl-L-homocysteine + H(+). Functionally, specifically methylates guanosine-37 in various tRNAs. This chain is tRNA (guanine-N(1)-)-methyltransferase, found in Nitratiruptor sp. (strain SB155-2).